Reading from the N-terminus, the 346-residue chain is Small ribosomal subunit biogenesis GTPase RsgA (346 aa).

Positions Val98–Leu261 constitute a CP-type G domain. Residues Thr148 to Asp151 and Gly200 to Thr208 contribute to the GTP site. 4 residues coordinate Zn(2+): Cys284, Cys289, His291, and Cys297. Positions Arg317 to Arg346 are disordered.

This sequence belongs to the TRAFAC class YlqF/YawG GTPase family. RsgA subfamily. In terms of assembly, monomer. Associates with 30S ribosomal subunit, binds 16S rRNA. Requires Zn(2+) as cofactor.

The protein resides in the cytoplasm. Its function is as follows. One of several proteins that assist in the late maturation steps of the functional core of the 30S ribosomal subunit. Helps release RbfA from mature subunits. May play a role in the assembly of ribosomal proteins into the subunit. Circularly permuted GTPase that catalyzes slow GTP hydrolysis, GTPase activity is stimulated by the 30S ribosomal subunit. The sequence is that of Small ribosomal subunit biogenesis GTPase RsgA from Mesorhizobium japonicum (strain LMG 29417 / CECT 9101 / MAFF 303099) (Mesorhizobium loti (strain MAFF 303099)).